The sequence spans 315 residues: Three-prime repair exonuclease 1 (315 aa).

Positions 18 and 20 each coordinate Mg(2+). Glu20–Ala21 is a substrate binding site. Ser78 is modified (phosphoserine). Tyr129 is a substrate binding site. At Ser167 the chain carries Phosphoserine. The active-site Proton donor/acceptor is the His195. Position 200 (Asp200) interacts with Mg(2+). Substrate is bound at residue Asp200. The necessary for endoplasmic reticulum localization stretch occupies residues Thr236–Gln315. Residues Pro243 to Gln315 are interaction with UBQLN1. Residues Arg256–Ala282 form a disordered region. Over residues Lys271–Ala282 the composition is skewed to pro residues. Positions Ala282–Gln315 are necessary for cytoplasmic retention.

This sequence belongs to the exonuclease superfamily. TREX family. As to quaternary structure, homodimer. Interacts (via proline-rich region) with TCERG1/CA150 (via the second WW domain). Component of the SET complex, composed of at least ANP32A, APEX1, HMGB2, NME1, SET and TREX1. Within this complex, directly interacts with SET; this interaction does not result in TREX1 inhibition. Also interacts with NME1, but only following translocation to the nucleus. Directly interacts with UBQLN1 (via ubiquitin-like domain); the interaction may control TREX1 subcellular location. Mg(2+) is required as a cofactor. Ubiquitinated, but not targeted to proteasomal degradation. Ubiquitination may be important for interaction with UBQLN1.

It is found in the nucleus. Its subcellular location is the cytoplasm. It localises to the cytosol. The protein resides in the endoplasmic reticulum membrane. The enzyme catalyses Exonucleolytic cleavage in the 3'- to 5'-direction to yield nucleoside 5'-phosphates.. In terms of biological role, major cellular 3'-to-5' DNA exonuclease which digests single-stranded DNA (ssDNA) and double-stranded DNA (dsDNA) with mismatched 3' termini. Prevents cell-intrinsic initiation of autoimmunity. Acts by metabolizing DNA fragments from endogenous retroelements, including L1, LTR and SINE elements. Plays a key role in degradation of DNA fragments at cytosolic micronuclei arising from genome instability: its association with the endoplasmic reticulum membrane directs TREX1 to ruptured micronuclei, leading to micronuclear DNA degradation. Micronuclear DNA degradation is required to limit CGAS activation and subsequent inflammation. Unless degraded, these DNA fragments accumulate in the cytosol and activate the cGAS-STING innate immune signaling, leading to the production of type I interferon. Prevents chronic ATM-dependent checkpoint activation, by processing ssDNA polynucleotide species arising from the processing of aberrant DNA replication intermediates. Inefficiently degrades oxidized DNA, such as that generated upon antimicrobial reactive oxygen production or upon absorption of UV light. During GZMA-mediated cell death, contributes to DNA damage in concert with NME1. NME1 nicks one strand of DNA and TREX1 removes bases from the free 3' end to enhance DNA damage and prevent DNA end reannealing and rapid repair. In Bos taurus (Bovine), this protein is Three-prime repair exonuclease 1.